Here is a 230-residue protein sequence, read N- to C-terminus: Ureidoacrylate amidohydrolase RutB (230 aa).

Catalysis depends on Asp-24, which acts as the Proton acceptor. Residue Lys-133 is part of the active site. Catalysis depends on Cys-166, which acts as the Nucleophile.

It belongs to the isochorismatase family. RutB subfamily.

It catalyses the reaction (Z)-3-ureidoacrylate + H2O + H(+) = (Z)-3-aminoacrylate + NH4(+) + CO2. It carries out the reaction (Z)-3-ureidoacrylate + H2O = (Z)-3-aminoacrylate + carbamate + H(+). The enzyme catalyses (Z)-2-methylureidoacrylate + H2O + H(+) = (Z)-2-methylaminoacrylate + NH4(+) + CO2. In terms of biological role, hydrolyzes ureidoacrylate to form aminoacrylate and carbamate. The carbamate hydrolyzes spontaneously, thereby releasing one of the nitrogen atoms of the pyrimidine ring as ammonia and one of its carbon atoms as CO2. The protein is Ureidoacrylate amidohydrolase RutB of Escherichia coli O103:H2 (strain 12009 / EHEC).